Reading from the N-terminus, the 452-residue chain is Glutathione gamma-glutamylcysteinyltransferase 2 (452 aa).

Residues 1–220 form the Peptidase C83 domain; that stretch reads MSMASLYRRS…GFMLISRPHR (220 aa). The stretch at 287–315 forms a coiled coil; that stretch reads EDVNQNLSSEEKSRLKLKQELLKQVQETK.

It belongs to the phytochelatin synthase family. In terms of tissue distribution, expressed in shoots, roots, leaves, stems and flowers.

The catalysed reaction is [Glu(-Cys)](n)-Gly + glutathione + H(+) = [Glu(-Cys)](n+1)-Gly + glycine. Requires cadmium for activity. Also activated in heterologous system by AsO(4)(3-) ions, but not by Cu(2+), Zn(2+), Mn(2+) or Ni(2+) ions. In terms of biological role, involved in the synthesis of phytochelatins (PC) and homophytochelatins (hPC), the heavy-metal-binding peptides of plants. In Arabidopsis thaliana (Mouse-ear cress), this protein is Glutathione gamma-glutamylcysteinyltransferase 2 (PCS2).